The chain runs to 120 residues: MIF-like protein mif-2 (120 aa).

It belongs to the MIF family.

The polypeptide is MIF-like protein mif-2 (mif-2) (Caenorhabditis elegans).